A 704-amino-acid polypeptide reads, in one-letter code: E3 ubiquitin-protein ligase MBR1 (704 aa).

6 disordered regions span residues 1-20 (MNPM…VNQV), 37-61 (NPAD…SSSH), 176-197 (SSLG…SPFG), 245-354 (LSLA…GENQ), 381-403 (SNPS…PRSN), and 436-525 (SLFV…RHRR). Positions 43 to 61 (FPNNSTPSGRPTYASSSSH) are enriched in polar residues. 2 stretches are compositionally biased toward low complexity: residues 184–196 (AAGE…ASPF) and 245–255 (LSLATPSQSSP). Composition is skewed to polar residues over residues 281 to 290 (FHSTRNTDTL), 300 to 329 (RQPQ…NLPL), and 340 to 354 (RSSS…GENQ). Pro residues predominate over residues 452–467 (QPNPTWIPPQNAPPHN). Residues 485–505 (SPSASHGGPLPLLPAGPSVSS) are compositionally biased toward low complexity. An RING-type; atypical zinc finger spans residues 656–697 (CCICQEEYVEGDNLGTLKCGHEFHKDCIKQWVMIKNLCPICK).

The protein belongs to the RING-type zinc finger family. Interacts with MED25 and UBC11.

The catalysed reaction is S-ubiquitinyl-[E2 ubiquitin-conjugating enzyme]-L-cysteine + [acceptor protein]-L-lysine = [E2 ubiquitin-conjugating enzyme]-L-cysteine + N(6)-ubiquitinyl-[acceptor protein]-L-lysine.. It functions in the pathway protein modification; protein ubiquitination. Functionally, E3 ubiquitin-protein ligase that functions as a regulator of MED25 stability by targeting MED25 for degradation in a RING-H2-dependent way. Proteasome-dependent degradation of MED25 seems to activate its function as positive regulator of FLOWERING LOCUS T (FT) and is important to induce the expression of FT and consequently to promote flowering. This is E3 ubiquitin-protein ligase MBR1 (MBR1) from Arabidopsis thaliana (Mouse-ear cress).